Reading from the N-terminus, the 31-residue chain is Cyclotide mden-L (31 aa).

Residues 1 to 31 (GSIPCGESCVYIPCISAVLGCSCKNKVCYRN) constitute a cross-link (cyclopeptide (Gly-Asn)). 3 cysteine pairs are disulfide-bonded: Cys5–Cys21, Cys9–Cys23, and Cys14–Cys28.

This sequence belongs to the cyclotide family. Bracelet subfamily. This is a cyclic peptide.

In terms of biological role, probably participates in a plant defense mechanism. The protein is Cyclotide mden-L of Melicytus dentatus (Tree violet).